Reading from the N-terminus, the 435-residue chain is Solute carrier family 38 member 8 (435 aa).

11 helical membrane passes run 29 to 49 (AVFI…PWAF), 55 to 75 (VVPA…GLVI), 100 to 120 (IGKL…VAFL), 151 to 171 (FTLP…REIA), 178 to 198 (ILGT…YYLW), 218 to 240 (VFSV…SIYC), 250 to 270 (WALV…LTGV), 295 to 315 (IIVA…IVLF), 348 to 368 (MPLT…MPDL), 374 to 394 (IIGG…LICA), and 410 to 430 (VWGV…TAAA).

Belongs to the amino acid/polyamine transporter 2 family. As to expression, expressed in fetal and adult brain, and spinal cord. In the brain, it is localized in the cell body and axon of the majority of neuronal cells and in a subset of glial cells. Found throughout the neuronal retina, with higher expression levels in the inner and outer plexiform layers and the photoreceptor layer. Very weak expression is also present in the kidneys, thymus, and testes.

The protein localises to the membrane. The protein resides in the cytoplasm. Its subcellular location is the cell cortex. It is found in the cell projection. It localises to the axon. The enzyme catalyses L-glutamine(out) = L-glutamine(in). The catalysed reaction is L-alanine(in) = L-alanine(out). It carries out the reaction L-histidine(out) = L-histidine(in). It catalyses the reaction L-aspartate(out) = L-aspartate(in). The enzyme catalyses L-arginine(in) = L-arginine(out). The catalysed reaction is L-leucine(in) = L-leucine(out). Electrogenic sodium-dependent amino acid transporter with a preference for L-glutamine, L-alanine, L-histidine, L-aspartate and L-arginine. May facilitate glutamine uptake in both excitatory and inhibitory neurons. The transport mechanism and stoichiometry remain to be elucidated. The protein is Solute carrier family 38 member 8 of Homo sapiens (Human).